A 1347-amino-acid chain; its full sequence is G-protein coupled receptor-associated sorting protein 1 (1347 aa).

Disordered stretches follow at residues 1–75 (MTRA…AYAK), 145–174 (ESIP…SWYR), and 188–281 (DFKW…NSRS). A compositionally biased stretch (low complexity) spans 21-33 (ENANAAEVEPEAP). Positions 211 to 226 (FRPRKSMKANNRFRHM) are enriched in basic residues. Residues 263-278 (PKDKTKVWSKPKEEPN) show a composition bias toward basic and acidic residues. The residue at position 295 (Ser295) is a Phosphoserine. 3 disordered regions span residues 310–344 (GEEA…AMSG), 364–396 (FSKS…QEAR), and 460–485 (QVSS…SKSM). Residues 316–325 (RSKPRARKGV) show a composition bias toward basic residues. Positions 370–396 (KKEPRTRAVPKEEVKTKARASTKQEAR) are enriched in basic and acidic residues. Polar residues predominate over residues 461–484 (VSSFCLGSGKKSSMESGPKATSKS). A phosphoserine mark is found at Ser619 and Ser626. Position 860 is a phosphothreonine (Thr860). Ser862 carries the post-translational modification Phosphoserine.

It belongs to the GPRASP family. Interacts with cytoplasmic tails of a variety of G-protein coupled receptors such as delta opioid receptor/OPRD1, beta-2 adrenergic receptor/ADRB2 and D4 dopamine receptor/DRD4 as well as D2 dopamine receptor/DRD2. Interacts with PER1. Interacts with BECN2; the interaction is direct. As to expression, expressed in the brain, with higher expression in the hippocampus, hypothalamus and olfactory bulb.

It is found in the cytoplasm. Modulates lysosomal sorting and functional down-regulation of a variety of G-protein coupled receptors. Targets receptors for degradation in lysosomes via its interaction with BECN2. The polypeptide is G-protein coupled receptor-associated sorting protein 1 (Gprasp1) (Mus musculus (Mouse)).